A 901-amino-acid chain; its full sequence is MKRENNLVLSLLFFVIVFLMQVGEAQNRITNVNVGIVNDIGTAYSNMTLLCINMSLSDFYSSHPETQTRLVTTVVDSKNDVVTAAAAALDLITNKEVKAILGPWTSMQAQFMIEMGQKSQVPIVTYSATSPSLASIRSQYFFRATYDDSSQVHAIKEIIKLFGWREVAPVYVDDTFGEGIMPRLTDVLQEINVRIPYRTVISPNATDDEISVELLRMMTLPTRVFVVHLVELLASRFFAKATEIGLMKQGYVWILTNTITDVLSIMNETEIETMQGVLGVKTYVPRSKELENFRSRWTKRFPISDLNVYGLWAYDATTALALAIEEAGTSNLTFVKMDAKRNVSELQGLGVSQYGPKLLQTLSRVRFQGLAGDFQFINGELQPSVFEIVNVNGQGGRTIGFWMKEYGLFKNVDQKPASKTTFSSWQDRLRPIIWPGDTTSVPKGWEIPTNGKRLQIGVPVNNTFQQFVKATRDPITNSTIFSGFSIDYFEAVIQAIPYDISYDFIPFQDGGYDALVYQVYLGKYDAVVADTTISSNRSMYVDFSLPYTPSGVGLVVPVKDSVRRSSTIFLMPLTLALWLISLLSFFIIGLVVWVLEHRVNPDFDGPGQYQLSTIFWFSFSIMVFAPRERVLSFWARVVVIIWYFLVLVLTQSYTASLASLLTTQHLHPTVTNINSLLAKGESVGYQSSFILGRLRDSGFSEASLVSYGSPEHCDALLSKGQAEGGVSAVLMEVPYVRIFLGQYCNKYKMVQTPFKVDGLGFVFPIGSPLVADISRAILKVEESNKANQLENAWFKPIDESCPDPLTNPDPNPSVSFRQLGFDSFWVLFLVAAIVCTMALLKFVYQFLKENPNQRNLRVLWEKFNEPDQKSYIKDVTKCQCSSGQGMPKNGQEGANAVNNGN.

The signal sequence occupies residues Met-1–Ala-25. Topologically, residues Gln-26–Thr-574 are extracellular. 9 N-linked (GlcNAc...) asparagine glycosylation sites follow: Asn-46, Asn-53, Asn-204, Asn-267, Asn-331, Asn-342, Asn-461, Asn-477, and Asn-536. A helical transmembrane segment spans residues Leu-575–Leu-595. Topologically, residues Glu-596 to Asp-604 are cytoplasmic. Residues Gly-605–Ala-625 form a helical membrane-spanning segment. Residues Pro-626–Arg-629 are Cytoplasmic-facing. The chain crosses the membrane as a helical span at residues Val-630–Thr-650. Residues Gln-651–Ser-823 lie on the Extracellular side of the membrane. A helical transmembrane segment spans residues Phe-824–Tyr-844. Over Gln-845–Asn-901 the chain is Cytoplasmic.

It belongs to the glutamate-gated ion channel (TC 1.A.10.1) family. As to quaternary structure, may form heteromers. Expressed predominantly in roots. First strongly detected in all cell types of the root except at the apex. Later expressed at the root-shoot junction.

It localises to the membrane. Functionally, glutamate-gated receptor that probably acts as a non-selective cation channel. May be involved in light-signal transduction and calcium homeostasis via the regulation of calcium influx into cells. The polypeptide is Glutamate receptor 2.1 (GLR2.1) (Arabidopsis thaliana (Mouse-ear cress)).